The chain runs to 768 residues: MRLWNRFSRLGNLLCACAACGCSFTPWRCSSSPLLSSFSAYNMSSGNRVTSSVGGSSGATEVCPSHTPLSSSTLLRYTIAPSEPTMGSPWQTSEESASRRLAALTSYPPSNIRNVAVVAHVDHGKTTLSDVLLRRTGVLKGSVNAGAYTDRLLVERERGITVKSQTCSMFLKYGGSEFLLNLIDTPGHVDFQYEVSRSVRAAQAVLLLVDVAQGIEAQTMSHFHMALDQGLAIIPVFTKMDCVLNDTTVDAALQQLEDSTGLLRSEVVFTSAKEQLGVEALLQAIIERVPSPSGAIGLSDVCQLPPLLPGSTARVAMEAEMVPLRAILLDSWTRECGGGLYRPPSKTSSALSGNVKIDEDKDTVTCLVSVIDGTLTARTNILLYHSQKRYEAREVGVIHPELRPTGALTVGMVGYVVFTRVQREDFSVGETLYTLPTRKFTRGGIAPVPGFRRVHPVVFAGFYPDEGEYVTQLREAVEKLRMNDPAVTVEPLECQALGSGLQLGFLGVLHMQIFQERLLSEFGQRVLVTPPVVQYKYREAAGGDDQPPKPLSVHTWRWLHEGVSCYMEPHVTATVVTPSEYAQIIDGEAQRHYRGKQLDMRVMDDARVLLRYKMPLADMVRGFFTFVKSQSHGYASLEYDELVYEEADLVRVDIVVQKARISALAVICPRHEAPSVGKRIVASLKSNLTRTAVDIPLQALVGSKVVARETVRAYRKDVTAKIHAGDISRKQKKWNDQKKGKERMARRTVGGVTLDQSVLAAAMGATAL.

The N-terminal 29 residues, M1–C29, are a transit peptide targeting the mitochondrion. One can recognise a tr-type G domain in the interval S110 to S293. GTP is bound by residues A119–T126, D184–H188, and T238–D241.

This sequence belongs to the TRAFAC class translation factor GTPase superfamily. Classic translation factor GTPase family. LepA subfamily.

The protein resides in the mitochondrion inner membrane. The enzyme catalyses GTP + H2O = GDP + phosphate + H(+). Promotes mitochondrial protein synthesis. May act as a fidelity factor of the translation reaction, by catalyzing a one-codon backward translocation of tRNAs on improperly translocated ribosomes. Binds to mitochondrial ribosomes in a GTP-dependent manner. The sequence is that of Translation factor GUF1 homolog, mitochondrial from Trypanosoma brucei brucei (strain 927/4 GUTat10.1).